Consider the following 225-residue polypeptide: Uridylate kinase (225 aa).

ATP is bound at residue 9 to 10 (GS). Residue Gly44 participates in UMP binding. The ATP site is built by Gly45 and Arg49. UMP contacts are provided by residues Asp66 and 114–120 (THPGHTT). Thr140, Asn141, Tyr146, and Asp149 together coordinate ATP.

It belongs to the UMP kinase family. In terms of assembly, homohexamer.

It localises to the cytoplasm. It catalyses the reaction UMP + ATP = UDP + ADP. It functions in the pathway pyrimidine metabolism; CTP biosynthesis via de novo pathway; UDP from UMP (UMPK route): step 1/1. Its activity is regulated as follows. Inhibited by UTP. Catalyzes the reversible phosphorylation of UMP to UDP. This chain is Uridylate kinase, found in Thermococcus onnurineus (strain NA1).